The chain runs to 775 residues: MASLIYRQLLTNSYSVDLHDEIEQIGSEKTQNVTVNPGPFAQTRYAPVNWGHGEINDSTTVEPILDGPYQPTTFTPPIDYWILINSNTNGVVYESTNNSDFWTAVVAVEPHVNPVDRQYTVFGENKQFNVRNDSDKWKFLEMFRSSSQNEFYNRRTLTSHTKLVGILKYGGRIWTFHGETPRATTDSSNTANLNDISIIVHSEFYIIPRSQESKCNEYINNGLPPIQNTRNVVPLSLSSRSIQYKRAQVNEDITISKTSLWKEMQYNSDIIIRFKFGNSIVKLGGLGYKWSEISFKAANYQYNYLRDGEQVTAHTTCSVNGVNNFSYNGGSLPTDFSVSRYEVIKENSYVYVDYWDDSKAFRNMVYVRSLAANLNSVKCTGGSYNFSLPVGAWPVMNGGAVSLHFAGVTLSTQFTDFVSLNSLRFRFSLTVDEPSFSILRTRTVNLYGLPAANPNNGNEYYEISGRFSLISLVPTNDDYQTPIMNSVTVRQDLERQLTDLREEFNSLSQEIAMSQLIDLALLPLDMFSMFSGIKSTIDLTKSMATSVMKKFRKSKLATSISEMTNSLSDAASSASRSVSIRSNISTISNLTNVSNDVSNVTNSLNDISTQTSTISKKLRLREMITQTEGMSFDDISAAVLKTKIDMSTQIGKNTLPDIVTEASEKFIPKRSYRILKDDEVMEINTEGKVFAYKIDTLNEVPFDVNKFAELVTNSPVISAIIDFKTLKNLNDNYGITRIEALNLIKSNPNVLRNFINQNNPIIRNRIEQLILQCKL.

The interval 65–223 (LDGPYQPTTF…KCNEYINNGL (159 aa)) is spike head. The interval 247-478 (AQVNEDITIS…LISLVPTNDD (232 aa)) is spike body and stalk (antigen domain). The short motif at 307-309 (DGE) is the DGE motif; interaction with ITGA2/ITGB1 heterodimer element. Cys317 and Cys379 form a disulfide bridge. The segment at 388–408 (LPVGAWPVMNGGAVSLHFAGV) is hydrophobic; possible role in virus entry into host cell. A YGL motif; interaction with ITGA4 motif is present at residues 447 to 449 (YGL). Residues 483-510 (IMNSVTVRQDLERQLTDLREEFNSLSQE) are a coiled coil. The spike foot stretch occupies residues 509–775 (QEIAMSQLID…IEQLILQCKL (267 aa)). Positions 643-645 (KID) match the KID motif; interaction with HSPA8 motif.

Belongs to the rotavirus VP4 family. In terms of assembly, homotrimer. VP4 adopts a dimeric appearance above the capsid surface, while forming a trimeric base anchored inside the capsid layer. Only hints of the third molecule are observed above the capsid surface. It probably performs a series of molecular rearrangements during viral entry. Prior to trypsin cleavage, it is flexible. The priming trypsin cleavage triggers its rearrangement into rigid spikes with approximate two-fold symmetry of their protruding parts. After an unknown second triggering event, cleaved VP4 may undergo another rearrangement, in which two VP5* subunits fold back on themselves and join a third subunit to form a tightly associated trimer, shaped like a folded umbrella. Interacts with VP6. Interacts with VP7. As to quaternary structure, homotrimer. The trimer is coiled-coil stabilized by its C-terminus, however, its N-terminus, known as antigen domain or 'body', seems to be flexible allowing it to self-associate either as a dimer or a trimer. Proteolytic cleavage by trypsin results in activation of VP4 functions and greatly increases infectivity. The penetration into the host cell is dependent on trypsin treatment of VP4. It produces two peptides, VP5* and VP8* that remain associated with the virion. Cleavage of VP4 by trypsin probably occurs in vivo in the lumen of the intestine prior to infection of enterocytes. Trypsin seems to be incorporated into the three-layered viral particles but remains inactive as long as the viral outer capsid is intact and would only be activated upon the solubilization of the latter.

The protein resides in the virion. It localises to the host rough endoplasmic reticulum. Its subcellular location is the host cell membrane. The protein localises to the host cytoplasm. It is found in the host cytoskeleton. The protein resides in the host endoplasmic reticulum-Golgi intermediate compartment. In terms of biological role, spike-forming protein that mediates virion attachment to the host epithelial cell receptors and plays a major role in cell penetration, determination of host range restriction and virulence. Rotavirus attachment and entry into the host cell probably involves multiple sequential contacts between the outer capsid proteins VP4 and VP7, and the cell receptors. It is subsequently lost, together with VP7, following virus entry into the host cell. Following entry into the host cell, low intracellular or intravesicular Ca(2+) concentration probably causes the calcium-stabilized VP7 trimers to dissociate from the virion. This step is probably necessary for the membrane-disrupting entry step and the release of VP4, which is locked onto the virion by VP7. During the virus exit from the host cell, VP4 seems to be required to target the newly formed virions to the host cell lipid rafts. Its function is as follows. Forms the spike 'foot' and 'body' and acts as a membrane permeabilization protein that mediates release of viral particles from endosomal compartments into the cytoplasm. During entry, the part of VP5* that protrudes from the virus folds back on itself and reorganizes from a local dimer to a trimer. This reorganization may be linked to membrane penetration by exposing VP5* hydrophobic region. In integrin-dependent strains, VP5* targets the integrin heterodimer ITGA2/ITGB1 for cell attachment. Forms the head of the spikes and mediates the recognition of specific host cell surface glycans. It is the viral hemagglutinin and an important target of neutralizing antibodies. In sialic acid-dependent strains, VP8* binds to host cell sialic acid, most probably a ganglioside, providing the initial contact. In some other strains, VP8* mediates the attachment to histo-blood group antigens (HBGAs) for viral entry. The polypeptide is Outer capsid protein VP4 (Homo sapiens (Human)).